We begin with the raw amino-acid sequence, 287 residues long: Orotidine 5'-phosphate decarboxylase (287 aa).

Lys97 acts as the Proton donor in catalysis.

It belongs to the OMP decarboxylase family. Type 2 subfamily.

It carries out the reaction orotidine 5'-phosphate + H(+) = UMP + CO2. Its pathway is pyrimidine metabolism; UMP biosynthesis via de novo pathway; UMP from orotate: step 2/2. The protein is Orotidine 5'-phosphate decarboxylase of Clostridium perfringens (strain SM101 / Type A).